Consider the following 633-residue polypeptide: Extracellular metalloproteinase mep (633 aa).

The first 18 residues, 1-18, serve as a signal peptide directing secretion; the sequence is MRLLSLAGAMALPLCVLA. Positions 19–244 are excised as a propeptide; sequence HPTHRTRGIA…IHGVVDYISD (226 aa). An N-linked (GlcNAc...) asparagine glycan is attached at Asn-326. Residue His-428 participates in Zn(2+) binding. The active site involves Glu-429. His-432 serves as a coordination point for Zn(2+). Residue Asn-514 is glycosylated (N-linked (GlcNAc...) asparagine).

This sequence belongs to the peptidase M36 family. The cofactor is Zn(2+).

Its subcellular location is the secreted. Its function is as follows. Secreted metalloproteinase that allows assimilation of proteinaceous substrates. This chain is Extracellular metalloproteinase mep (mep), found in Aspergillus terreus (strain NIH 2624 / FGSC A1156).